The following is a 943-amino-acid chain: Glutamate receptor ionotropic, NMDA 1 (943 aa).

Positions 1 to 20 (MSTMRLLTLALLFSCSFARA) are cleaved as a signal peptide. Over 21-580 (ACDPKIVNIG…TLDSFMQPFQ (560 aa)) the chain is Extracellular. 10 N-linked (GlcNAc...) asparagine glycosylation sites follow: Asn-61, Asn-224, Asn-260, Asn-297, Asn-321, Asn-371, Asn-389, Asn-461, Asn-492, and Asn-512. A disulfide bridge connects residues Cys-79 and Cys-329. 2 disulfide bridges follow: Cys-441–Cys-475 and Cys-457–Cys-476. Pro-537, Thr-539, and Arg-544 together coordinate glycine. The chain crosses the membrane as a helical span at residues 581–601 (STLWLLVGLSVHVVAVMLYLL). Over 602–623 (DRFSPFGRFKVNSEEEEEDALT) the chain is Cytoplasmic. An intramembrane region (discontinuously helical) is located at residues 624 to 645 (LSSAMWFSWGVLLNSGIGEGAP). Residues 624–645 (LSSAMWFSWGVLLNSGIGEGAP) are pore-forming. At 646–651 (RSFSAR) the chain is on the cytoplasmic side. A helical transmembrane segment spans residues 652 to 668 (ILGMVWAGFAMIIVASY). At 669-833 (TANLAAFLVL…NAPATLTFEN (165 aa)) the chain is on the extracellular side. Residue Asn-695 is glycosylated (N-linked (GlcNAc...) asparagine). Glycine contacts are provided by Ser-709 and Asp-753. Cysteines 765 and 819 form a disulfide. Residue Asn-792 is glycosylated (N-linked (GlcNAc...) asparagine). A helical membrane pass occupies residues 834–854 (MAGVFMLVAGGIVAGIFLIFI). The Cytoplasmic portion of the chain corresponds to 855–943 (EIAYKRHKDA…LSDPSVSTVV (89 aa)). 4 positions are modified to phosphoserine: Ser-910, Ser-911, Ser-917, and Ser-918.

This sequence belongs to the glutamate-gated ion channel (TC 1.A.10.1) family. NR1/GRIN1 subfamily. As to quaternary structure, heterotetramer; the NMDAR subunits are modular and harbor tiered domains that function in concert to regulate opening and closing of the cation-selective ion channel pore. Forms heterotetrameric channels composed of two GluN1/zeta subunits (GRIN1), and two identical GluN2/epsilon subunits (GRIN2A, GRIN2B, GRIN2C or GRIN2D) or GluN3 subunits (GRIN3A or GRIN3B) (in vitro). Can also form heterotetrameric channels that contain at least two GluN1 subunits and at least two different GluN2 subunits (or a combination of one GluN2 and one GluN3 subunits) (in vitro). In vivo, the subunit composition may vary in function of the expression levels of the different subunits. Found in a complex with GRIN2A or GRIN2B, GRIN3A and PPP2CB. Found in a complex with GRIN2A or GRIN2B and GRIN3B. Interacts with SNX27 (via PDZ domain); the interaction is required for recycling to the plasma membrane when endocytosed and prevent degradation in lysosomes. Interacts with DLG4 and MPDZ. Interacts with LRFN1 and LRFN2. Interacts with MYZAP. Found in a complex with DLG4 and PRR7. Found in a complex with GRIN2B and PRR7. Interacts with PRR7; the interaction is reduced following NMDA receptor activity. Post-translationally, NMDA is probably regulated by C-terminal phosphorylation of an isoform of GRIN1 by PKC. Dephosphorylated on Ser-897 probably by protein phosphatase 2A (PPP2CB). Its phosphorylated state is influenced by the formation of the NMDAR-PPP2CB complex and the NMDAR channel activity.

The protein resides in the cell membrane. Its subcellular location is the postsynaptic cell membrane. The protein localises to the postsynaptic density membrane. It localises to the synaptic cell membrane. It catalyses the reaction Ca(2+)(in) = Ca(2+)(out). The enzyme catalyses Na(+)(in) = Na(+)(out). The catalysed reaction is K(+)(in) = K(+)(out). Its function is as follows. Component of N-methyl-D-aspartate (NMDA) receptors (NMDARs) that function as heterotetrameric, ligand-gated cation channels with high calcium permeability and voltage-dependent block by Mg(2+). NMDARs participate in synaptic plasticity for learning and memory formation by contributing to the long-term potentiation (LTP). Channel activation requires binding of the neurotransmitter L-glutamate to the GluN2 subunit, glycine or D-serine binding to the GluN1 subunit, plus membrane depolarization to eliminate channel inhibition by Mg(2+). NMDARs mediate simultaneously the potasium efflux and the influx of calcium and sodium. Each GluN2 or GluN3 subunit confers differential attributes to channel properties, including activation, deactivation and desensitization kinetics, pH sensitivity, Ca2(+) permeability, and binding to allosteric modulators. The GluN3 subunits confer distinctive ion channel activation mechanism, which relies exclusively on glycine and does not involve glutamate. The chain is Glutamate receptor ionotropic, NMDA 1 from Canis lupus familiaris (Dog).